We begin with the raw amino-acid sequence, 116 residues long: Phosphoribosyl-ATP pyrophosphatase (116 aa).

It belongs to the PRA-PH family.

It localises to the cytoplasm. The enzyme catalyses 1-(5-phospho-beta-D-ribosyl)-ATP + H2O = 1-(5-phospho-beta-D-ribosyl)-5'-AMP + diphosphate + H(+). Its pathway is amino-acid biosynthesis; L-histidine biosynthesis; L-histidine from 5-phospho-alpha-D-ribose 1-diphosphate: step 2/9. This Bordetella avium (strain 197N) protein is Phosphoribosyl-ATP pyrophosphatase.